Reading from the N-terminus, the 173-residue chain is Calcineurin subunit B (173 aa).

4 EF-hand domains span residues 20–55, 59–87, 89–124, and 130–165; these read DEIDRLRKRFMKLDTDASGILETNEFLSLPGVAANP, RLMDVFDENHSGDVDFQEFINGLSTFSTK, NKKEKLRFAFKVYDIDRDGYISNGELFIVLKMMVGN, and QLQQIVDKTIMEADKDGDGKISFEEFEAQVGGTNVY. Ca(2+)-binding residues include Asp33, Asp35, Ser37, Glu44, Asp65, Asn67, Ser69, Asp71, Glu76, Asp102, Asp104, Asp106, Tyr108, Glu113, Asp143, Asp145, Asp147, Lys149, and Glu154.

This sequence belongs to the calcineurin regulatory subunit family. Composed of a catalytic subunit (A) and a regulatory subunit (B).

Its function is as follows. Regulatory subunit of calcineurin, a calcium-dependent, calmodulin stimulated protein phosphatase. Confers calcium sensitivity. This Yarrowia lipolytica (strain CLIB 122 / E 150) (Yeast) protein is Calcineurin subunit B (CNB1).